Reading from the N-terminus, the 657-residue chain is Probable Xaa-Pro aminopeptidase P (657 aa).

Residues D453, D464, E562, and E576 each contribute to the Mn(2+) site.

This sequence belongs to the peptidase M24B family. Mn(2+) serves as cofactor.

It catalyses the reaction Release of any N-terminal amino acid, including proline, that is linked to proline, even from a dipeptide or tripeptide.. Catalyzes the removal of a penultimate prolyl residue from the N-termini of peptides. The protein is Probable Xaa-Pro aminopeptidase P (ampp) of Talaromyces marneffei (strain ATCC 18224 / CBS 334.59 / QM 7333) (Penicillium marneffei).